The chain runs to 864 residues: Seed linoleate 9S-lipoxygenase (864 aa).

The PLAT domain maps to leucine 44 to valine 171. The 691-residue stretch at threonine 174–isoleucine 864 folds into the Lipoxygenase domain. Residues threonine 244–proline 264 are disordered. Fe cation-binding residues include histidine 525, histidine 530, histidine 716, asparagine 720, and isoleucine 864.

Belongs to the lipoxygenase family. Monomer. It depends on Fe cation as a cofactor. In terms of tissue distribution, germinated cotyledons.

It is found in the cytoplasm. It carries out the reaction (9Z,12Z)-octadecadienoate + O2 = (9S)-hydroperoxy-(10E,12Z)-octadecadienoate. It participates in lipid metabolism; oxylipin biosynthesis. Functionally, plant lipoxygenase may be involved in a number of diverse aspects of plant physiology including growth and development, pest resistance, and senescence or responses to wounding. It catalyzes the hydroperoxidation of lipids containing a cis,cis-1,4-pentadiene structure. In Glycine max (Soybean), this protein is Seed linoleate 9S-lipoxygenase (LOX1.4).